A 448-amino-acid chain; its full sequence is GTPase Der (448 aa).

EngA-type G domains follow at residues 3–167 and 182–355; these read PVIA…EPPE and TRLA…ASAT. GTP contacts are provided by residues 9 to 16, 56 to 60, 119 to 122, 188 to 195, 235 to 239, and 300 to 303; these read GRPNVGKS, DTGGF, NKAE, DTAGL, and NKWD. In terms of domain architecture, KH-like spans 356–440; the sequence is RKLPTPQLTR…PMRIELRASH (85 aa).

The protein belongs to the TRAFAC class TrmE-Era-EngA-EngB-Septin-like GTPase superfamily. EngA (Der) GTPase family. As to quaternary structure, associates with the 50S ribosomal subunit.

Its function is as follows. GTPase that plays an essential role in the late steps of ribosome biogenesis. In Leptothrix cholodnii (strain ATCC 51168 / LMG 8142 / SP-6) (Leptothrix discophora (strain SP-6)), this protein is GTPase Der.